A 459-amino-acid polypeptide reads, in one-letter code: Argininosuccinate lyase (459 aa).

The protein belongs to the lyase 1 family. Argininosuccinate lyase subfamily.

The protein localises to the cytoplasm. It carries out the reaction 2-(N(omega)-L-arginino)succinate = fumarate + L-arginine. It participates in amino-acid biosynthesis; L-arginine biosynthesis; L-arginine from L-ornithine and carbamoyl phosphate: step 3/3. In Desulforudis audaxviator (strain MP104C), this protein is Argininosuccinate lyase.